Consider the following 170-residue polypeptide: ATP synthase subunit b (170 aa).

A helical membrane pass occupies residues 11–31 (AFTFGDAFFTLFAFAILLVLI).

Belongs to the ATPase B chain family. F-type ATPases have 2 components, F(1) - the catalytic core - and F(0) - the membrane proton channel. F(1) has five subunits: alpha(3), beta(3), gamma(1), delta(1), epsilon(1). F(0) has three main subunits: a(1), b(2) and c(10-14). The alpha and beta chains form an alternating ring which encloses part of the gamma chain. F(1) is attached to F(0) by a central stalk formed by the gamma and epsilon chains, while a peripheral stalk is formed by the delta and b chains.

The protein localises to the cell membrane. Functionally, f(1)F(0) ATP synthase produces ATP from ADP in the presence of a proton or sodium gradient. F-type ATPases consist of two structural domains, F(1) containing the extramembraneous catalytic core and F(0) containing the membrane proton channel, linked together by a central stalk and a peripheral stalk. During catalysis, ATP synthesis in the catalytic domain of F(1) is coupled via a rotary mechanism of the central stalk subunits to proton translocation. Component of the F(0) channel, it forms part of the peripheral stalk, linking F(1) to F(0). This Listeria innocua serovar 6a (strain ATCC BAA-680 / CLIP 11262) protein is ATP synthase subunit b.